We begin with the raw amino-acid sequence, 384 residues long: Kinesin-like protein KIF25 (384 aa).

Residues 1 to 20 (MTWTSGQLQREKQARPGSGA) form a disordered region. The region spanning 7 to 363 (QLQREKQARP…LGFGIRARQV (357 aa)) is the Kinesin motor domain. 65-72 (GQTGSGKS) contacts ATP. Disordered regions lie at residues 217-256 (DQACSATLPREQTEAGRAGRSRRASQGALAPQLVPGNPAG) and 362-384 (QVQRGPARKKPPSSQTEGKRRPD).

This sequence belongs to the TRAFAC class myosin-kinesin ATPase superfamily. Kinesin family. Homotetramer.

It is found in the cytoplasm. It localises to the cytoskeleton. Its subcellular location is the microtubule organizing center. The protein localises to the centrosome. Functionally, minus-end microtubule-dependent motor protein. Acts as a negative regulator of centrosome separation required to prevent premature centrosome separation during interphase. Required to maintain a centered nucleus to ensure that the spindle is stably oriented at the onset of mitosis. May also act as a negative regulator of amino acid starvation-induced autophagy. The polypeptide is Kinesin-like protein KIF25 (Homo sapiens (Human)).